Consider the following 397-residue polypeptide: Mannosylglycerate synthase (397 aa).

Residues proline 7–glutamate 11, isoleucine 35, glutamine 66, lysine 76, aspartate 100, and aspartate 100–alanine 101 each bind GDP-alpha-D-mannose. Aspartate 102 serves as a coordination point for a divalent metal cation. Residues arginine 131 and alanine 136–threonine 139 contribute to the (R)-glycerate site. Residues leucine 163 and aspartate 192 each contribute to the GDP-alpha-D-mannose site. Histidine 217 lines the a divalent metal cation pocket. Positions 218 and 220 each coordinate GDP-alpha-D-mannose.

This sequence belongs to the glycosyltransferase 78 family. In terms of assembly, homotetramer. Dimer of dimers. It depends on Mg(2+) as a cofactor. Ca(2+) serves as cofactor. The cofactor is Mn(2+). Requires Ni(2+) as cofactor. Co(2+) is required as a cofactor.

The enzyme catalyses (R)-glycerate + GDP-alpha-D-mannose = (2R)-2-O-(alpha-D-mannosyl)-glycerate + GDP + H(+). With respect to regulation, inhibited by GDP. Its function is as follows. Involved in the biosynthesis of the stress protectant 2-O-alpha-D-mannosyl glycerate (MG) which is produced in response to growth at supraoptimal temperature and salinity, and protects several enzymes against inactivation by temperature, freeze-drying and osmotic stress. Catalyzes the condensation of alpha-GDP-D-mannose (GDP-Man) with D-glycerate to produce alpha-mannosyl-D-glycerate. It is specific for GDP-Man, but it can also use alpha-GDP-D-glucose (GDP-Glc), beta-GDP-D-fructose, alpha-UDP-D-mannose and alpha-UDP-D-glucose as sugar donors. It is specific for D-glycerate, but it can also use D-lactate and glycolate as sugar acceptors. This reaction occurs with a net retention of anomeric configuration; the newly formed glycosidic linkage has the same alpha configuration as the sugar donor. The sequence is that of Mannosylglycerate synthase (mgs) from Rhodothermus marinus (Rhodothermus obamensis).